The primary structure comprises 473 residues: Protein nucleotidyltransferase YdiU (473 aa).

The ATP site is built by Gly79, Gly81, Arg82, Lys102, Asp114, Gly115, Arg165, and Arg172. Catalysis depends on Asp241, which acts as the Proton acceptor. The Mg(2+) site is built by Asn242 and Asp251. Asp251 serves as a coordination point for ATP.

This sequence belongs to the SELO family. The cofactor is Mg(2+). Mn(2+) serves as cofactor.

It carries out the reaction L-seryl-[protein] + ATP = 3-O-(5'-adenylyl)-L-seryl-[protein] + diphosphate. The catalysed reaction is L-threonyl-[protein] + ATP = 3-O-(5'-adenylyl)-L-threonyl-[protein] + diphosphate. The enzyme catalyses L-tyrosyl-[protein] + ATP = O-(5'-adenylyl)-L-tyrosyl-[protein] + diphosphate. It catalyses the reaction L-histidyl-[protein] + UTP = N(tele)-(5'-uridylyl)-L-histidyl-[protein] + diphosphate. It carries out the reaction L-seryl-[protein] + UTP = O-(5'-uridylyl)-L-seryl-[protein] + diphosphate. The catalysed reaction is L-tyrosyl-[protein] + UTP = O-(5'-uridylyl)-L-tyrosyl-[protein] + diphosphate. Functionally, nucleotidyltransferase involved in the post-translational modification of proteins. It can catalyze the addition of adenosine monophosphate (AMP) or uridine monophosphate (UMP) to a protein, resulting in modifications known as AMPylation and UMPylation. In Marinomonas sp. (strain MWYL1), this protein is Protein nucleotidyltransferase YdiU.